A 374-amino-acid polypeptide reads, in one-letter code: DNA replication and repair protein RecF (374 aa).

30 to 37 (GENAQGKT) contacts ATP.

It belongs to the RecF family.

It localises to the cytoplasm. The RecF protein is involved in DNA metabolism; it is required for DNA replication and normal SOS inducibility. RecF binds preferentially to single-stranded, linear DNA. It also seems to bind ATP. The sequence is that of DNA replication and repair protein RecF from Pediococcus pentosaceus (strain ATCC 25745 / CCUG 21536 / LMG 10740 / 183-1w).